The chain runs to 461 residues: L-seryl-tRNA(Sec) selenium transferase (461 aa).

Lysine 294 carries the post-translational modification N6-(pyridoxal phosphate)lysine.

It belongs to the SelA family. Requires pyridoxal 5'-phosphate as cofactor.

The protein resides in the cytoplasm. The enzyme catalyses L-seryl-tRNA(Sec) + selenophosphate + H(+) = L-selenocysteinyl-tRNA(Sec) + phosphate. The protein operates within aminoacyl-tRNA biosynthesis; selenocysteinyl-tRNA(Sec) biosynthesis; selenocysteinyl-tRNA(Sec) from L-seryl-tRNA(Sec) (bacterial route): step 1/1. Converts seryl-tRNA(Sec) to selenocysteinyl-tRNA(Sec) required for selenoprotein biosynthesis. The sequence is that of L-seryl-tRNA(Sec) selenium transferase from Actinobacillus pleuropneumoniae serotype 5b (strain L20).